Here is a 641-residue protein sequence, read N- to C-terminus: Toxin TseL (641 aa).

In terms of assembly, interacts with VgrG3; this interaction allows TseL secretion to target cells.

Its subcellular location is the secreted. In terms of biological role, toxin secreted by the type VI (T6SS) secretion system that acts on prokaryotic as well as eukaryotic target cells. This Vibrio cholerae serotype O1 (strain ATCC 39315 / El Tor Inaba N16961) protein is Toxin TseL.